We begin with the raw amino-acid sequence, 182 residues long: Mid1-interacting protein 1 (182 aa).

Methionine 1 bears the N-acetylmethionine mark. Positions 55–75 (VGGSGGCLEERTTPAPSPGSA) are disordered. A phosphoserine mark is found at serine 71, serine 74, and serine 78.

It belongs to the SPOT14 family. As to quaternary structure, homodimer in the absence of THRSP. Heterodimer with THRSP. The homodimer interacts with ACACA and ACACB. Promotes polymerization of Acetyl-CoA carboxylase to form complexes that contain MID1IP1 and ACACA and/or ACACB. Interaction with THRSP interferes with ACACA binding. During embryonic development, expressed mainly in the neuroepithelial midline, urogenital apparatus and digits. Detected in adult white fat, liver, heart, brain and kidney. Expressed at very low levels in lactating mammary gland.

Its subcellular location is the nucleus. It is found in the cytoplasm. The protein resides in the cytoskeleton. Its function is as follows. Plays a role in the regulation of lipogenesis in liver. Up-regulates ACACA enzyme activity. Required for efficient lipid biosynthesis, including triacylglycerol, diacylglycerol and phospholipid. Involved in stabilization of microtubules. The polypeptide is Mid1-interacting protein 1 (Mid1ip1) (Mus musculus (Mouse)).